The sequence spans 170 residues: Probable peptide methionine sulfoxide reductase (170 aa).

The protein belongs to the MsrA Met sulfoxide reductase family.

The protein resides in the cytoplasm. Its subcellular location is the nucleus. The catalysed reaction is L-methionyl-[protein] + [thioredoxin]-disulfide + H2O = L-methionyl-(S)-S-oxide-[protein] + [thioredoxin]-dithiol. It catalyses the reaction [thioredoxin]-disulfide + L-methionine + H2O = L-methionine (S)-S-oxide + [thioredoxin]-dithiol. Functionally, has an important function as a repair enzyme for proteins that have been inactivated by oxidation. Catalyzes the reversible oxidation-reduction of methionine sulfoxide in proteins to methionine. The polypeptide is Probable peptide methionine sulfoxide reductase (mxr1) (Schizosaccharomyces pombe (strain 972 / ATCC 24843) (Fission yeast)).